Reading from the N-terminus, the 306-residue chain is UDP-3-O-acyl-N-acetylglucosamine deacetylase (306 aa).

The Zn(2+) site is built by His-79, His-238, and Asp-242. Catalysis depends on His-265, which acts as the Proton donor.

This sequence belongs to the LpxC family. The cofactor is Zn(2+).

The catalysed reaction is a UDP-3-O-[(3R)-3-hydroxyacyl]-N-acetyl-alpha-D-glucosamine + H2O = a UDP-3-O-[(3R)-3-hydroxyacyl]-alpha-D-glucosamine + acetate. The protein operates within glycolipid biosynthesis; lipid IV(A) biosynthesis; lipid IV(A) from (3R)-3-hydroxytetradecanoyl-[acyl-carrier-protein] and UDP-N-acetyl-alpha-D-glucosamine: step 2/6. Functionally, catalyzes the hydrolysis of UDP-3-O-myristoyl-N-acetylglucosamine to form UDP-3-O-myristoylglucosamine and acetate, the committed step in lipid A biosynthesis. This is UDP-3-O-acyl-N-acetylglucosamine deacetylase from Hamiltonella defensa subsp. Acyrthosiphon pisum (strain 5AT).